Here is a 311-residue protein sequence, read N- to C-terminus: Probable 5-dehydro-4-deoxyglucarate dehydratase (311 aa).

This sequence belongs to the DapA family.

The catalysed reaction is 5-dehydro-4-deoxy-D-glucarate + H(+) = 2,5-dioxopentanoate + CO2 + H2O. The protein operates within carbohydrate acid metabolism; D-glucarate degradation; 2,5-dioxopentanoate from D-glucarate: step 2/2. The chain is Probable 5-dehydro-4-deoxyglucarate dehydratase from Ralstonia nicotianae (strain ATCC BAA-1114 / GMI1000) (Ralstonia solanacearum).